The primary structure comprises 651 residues: Beta-mannosyltransferase 7 (651 aa).

The Cytoplasmic portion of the chain corresponds to Met-1 to Asn-19. The chain crosses the membrane as a helical span at residues Leu-20–Ser-42. The Extracellular segment spans residues Arg-43–Thr-651. Residues Asn-271 and Asn-423 are each glycosylated (N-linked (GlcNAc...) asparagine).

The protein belongs to the BMT family.

The protein localises to the membrane. Functionally, beta-mannosyltransferase involved in cell wall biosynthesis through beta-1,2-mannosylation of cell wall phosphopeptidomannan. This chain is Beta-mannosyltransferase 7 (BMT7), found in Candida albicans (strain SC5314 / ATCC MYA-2876) (Yeast).